The sequence spans 293 residues: MEGSLFFTNATPSTSILKITDYKYLRLEKNDSTFVAELVLCRPKQYNSMDDDFYNEFISIYDEIQNDSKIRCVILRGEGKGLTAGLNLGKIAPLITGDSEVSQSQNNLDLFKMIRRWQASLDKINKCSKPTIALIHGACIGGGVDMITACDIRLCSSDAKFSIRETKLSIIADLGTLQRISKIVGSGFARELALTGKDIDAKTAERFNLVNHVYPDHDTLLSEGRKLALSIAQNSPLVVQATKLTLNHADDHTIDEGLYRVALQNAAFLKSDDLNESATSFFEKRQPIFKCNL.

Residues 84–88 (AGLNL) and Gly-142 contribute to the substrate site.

It belongs to the enoyl-CoA hydratase/isomerase family.

The protein localises to the mitochondrion. It carries out the reaction (3E,5Z)-octadienoyl-CoA = (2E,4E)-octadienoyl-CoA. The enzyme catalyses (3E,5Z,8Z,11Z,14Z)-eicosapentaenoyl-CoA = (2E,4E,8Z,11Z,14Z)-eicosapentaenoyl-CoA. It functions in the pathway lipid metabolism; fatty acid beta-oxidation. In terms of biological role, isomerization of 3-trans,5-cis-dienoyl-CoA to 2-trans,4-trans-dienoyl-CoA. This is Delta(3,5)-Delta(2,4)-dienoyl-CoA isomerase, mitochondrial (ech1) from Dictyostelium discoideum (Social amoeba).